The primary structure comprises 122 residues: MIQQESRLRVADNTGAREILCIRVLGGSGRRYASIGDVIVATVKDAIPGAGVKKGDVVKAVVVRTAKEKRRPDGSYIRFDENAAVIIKDGGDPRGTRIFGPVGRELRDKRFMKIISLAPEVL.

The protein belongs to the universal ribosomal protein uL14 family. Part of the 50S ribosomal subunit. Forms a cluster with proteins L3 and L19. In the 70S ribosome, L14 and L19 interact and together make contacts with the 16S rRNA in bridges B5 and B8.

Its function is as follows. Binds to 23S rRNA. Forms part of two intersubunit bridges in the 70S ribosome. In Salinispora tropica (strain ATCC BAA-916 / DSM 44818 / JCM 13857 / NBRC 105044 / CNB-440), this protein is Large ribosomal subunit protein uL14.